We begin with the raw amino-acid sequence, 230 residues long: Flagellar L-ring protein (230 aa).

The N-terminal stretch at 1–22 (MSPLSNFARTALACAVAALLGG) is a signal peptide. C23 carries N-palmitoyl cysteine lipidation. C23 is lipidated: S-diacylglycerol cysteine.

It belongs to the FlgH family. In terms of assembly, the basal body constitutes a major portion of the flagellar organelle and consists of four rings (L,P,S, and M) mounted on a central rod.

Its subcellular location is the cell outer membrane. The protein localises to the bacterial flagellum basal body. Its function is as follows. Assembles around the rod to form the L-ring and probably protects the motor/basal body from shearing forces during rotation. The chain is Flagellar L-ring protein from Stenotrophomonas maltophilia (strain R551-3).